The chain runs to 507 residues: Maturase K (507 aa).

Belongs to the intron maturase 2 family. MatK subfamily.

The protein resides in the plastid. It is found in the chloroplast. Usually encoded in the trnK tRNA gene intron. Probably assists in splicing its own and other chloroplast group II introns. The chain is Maturase K from Buxus microphylla (Littleleaf boxwood).